The sequence spans 466 residues: Soluble pyridine nucleotide transhydrogenase (466 aa).

36–45 (ERYQNVGGGC) is a binding site for FAD.

The protein belongs to the class-I pyridine nucleotide-disulfide oxidoreductase family. The cofactor is FAD.

It localises to the cytoplasm. It catalyses the reaction NAD(+) + NADPH = NADH + NADP(+). In terms of biological role, conversion of NADPH, generated by peripheral catabolic pathways, to NADH, which can enter the respiratory chain for energy generation. The polypeptide is Soluble pyridine nucleotide transhydrogenase (Escherichia coli O81 (strain ED1a)).